The chain runs to 334 residues: Zinc finger Ran-binding domain-containing protein 2 (334 aa).

RanBP2-type zinc fingers lie at residues 9-40 (SDGD…EKTT) and 65-94 (SAND…PKYA). Positions 117–334 (REESDGEYDE…SGSRTSSKKK (218 aa)) are disordered. A compositionally biased stretch (acidic residues) spans 150–163 (DKESEGEDEEDEDG). Positions 196 to 212 (KKKKSNRRSRSKSRSSH) are enriched in basic residues. Low complexity-rich tracts occupy residues 213–224 (SRSSSRSSSHSS) and 258–285 (SRSS…SSSP). Basic residues predominate over residues 302–318 (RKKRRSRSRSPERRRRS). Residues 319–334 (SSGSSHSGSRTSSKKK) are compositionally biased toward low complexity.

Belongs to the ZRANB2 family.

It localises to the nucleus. Functionally, may regulate alternative splicing by interfering with constitutive 5'-splice site selection. The sequence is that of Zinc finger Ran-binding domain-containing protein 2 from Gallus gallus (Chicken).